Here is a 332-residue protein sequence, read N- to C-terminus: Acetyl-coenzyme A carboxylase carboxyl transferase subunit alpha (332 aa).

Residues 44–298 (QLESRAQNLR…KETLVNNLEE (255 aa)) form the CoA carboxyltransferase C-terminal domain.

It belongs to the AccA family. In terms of assembly, acetyl-CoA carboxylase is a heterohexamer composed of biotin carboxyl carrier protein (AccB), biotin carboxylase (AccC) and two subunits each of ACCase subunit alpha (AccA) and ACCase subunit beta (AccD).

It localises to the cytoplasm. The enzyme catalyses N(6)-carboxybiotinyl-L-lysyl-[protein] + acetyl-CoA = N(6)-biotinyl-L-lysyl-[protein] + malonyl-CoA. It participates in lipid metabolism; malonyl-CoA biosynthesis; malonyl-CoA from acetyl-CoA: step 1/1. Component of the acetyl coenzyme A carboxylase (ACC) complex. First, biotin carboxylase catalyzes the carboxylation of biotin on its carrier protein (BCCP) and then the CO(2) group is transferred by the carboxyltransferase to acetyl-CoA to form malonyl-CoA. The polypeptide is Acetyl-coenzyme A carboxylase carboxyl transferase subunit alpha (Crocosphaera subtropica (strain ATCC 51142 / BH68) (Cyanothece sp. (strain ATCC 51142))).